The chain runs to 150 residues: MPPKKAARPAQENISLGPQIREGELVFGVARIFASFNDTFVHVTDLSGRETTDRVIGGIKVKADRDESSPYAAMLAAQDVAARCKELGITALHIKIRATGGNGTRTPGPGAQSALRALARSGMKIGRIEDVTPTPSDSTRRKGGRRGRRL.

The segment at 126-150 is disordered; the sequence is GRIEDVTPTPSDSTRRKGGRRGRRL. Positions 141–150 are enriched in basic residues; that stretch reads RKGGRRGRRL.

The protein belongs to the universal ribosomal protein uS11 family. Component of the small ribosomal subunit (SSU). Mature N.crassa ribosomes consist of a small (40S) and a large (60S) subunit. The 40S small subunit contains 1 molecule of ribosomal RNA (18S rRNA) and at least 32 different proteins. The large 60S subunit contains 3 rRNA molecules (26S, 5.8S and 5S rRNA) and at least 42 different proteins.

It is found in the cytoplasm. Component of the ribosome, a large ribonucleoprotein complex responsible for the synthesis of proteins in the cell. The small ribosomal subunit (SSU) binds messenger RNAs (mRNAs) and translates the encoded message by selecting cognate aminoacyl-transfer RNA (tRNA) molecules. The large subunit (LSU) contains the ribosomal catalytic site termed the peptidyl transferase center (PTC), which catalyzes the formation of peptide bonds, thereby polymerizing the amino acids delivered by tRNAs into a polypeptide chain. The nascent polypeptides leave the ribosome through a tunnel in the LSU and interact with protein factors that function in enzymatic processing, targeting, and the membrane insertion of nascent chains at the exit of the ribosomal tunnel. uS11 is involved in nucleolar processing of pre-18S ribosomal RNA and ribosome assembly. This chain is Small ribosomal subunit protein uS11 (rps-14), found in Neurospora crassa (strain ATCC 24698 / 74-OR23-1A / CBS 708.71 / DSM 1257 / FGSC 987).